A 148-amino-acid polypeptide reads, in one-letter code: Endoribonuclease YbeY (148 aa).

Positions 102, 106, and 112 each coordinate Zn(2+).

Belongs to the endoribonuclease YbeY family. Requires Zn(2+) as cofactor.

The protein resides in the cytoplasm. Single strand-specific metallo-endoribonuclease involved in late-stage 70S ribosome quality control and in maturation of the 3' terminus of the 16S rRNA. The protein is Endoribonuclease YbeY of Phytoplasma mali (strain AT).